A 331-amino-acid polypeptide reads, in one-letter code: Gamma-parvin (331 aa).

Methionine 1 carries the post-translational modification N-acetylmethionine. The interval 18-38 is disordered; that stretch reads QPTEEELPRGGKKKYLSPNSK. Calponin-homology (CH) domains lie at 44–151 and 210–317; these read EELQ…KRFQ and HAVQ…QKHS.

The protein belongs to the parvin family. Interacts with ILK; the interaction promotes the establishment of cell polarity required for leukocyte migration. Interacts with ARHGEF6; the guanine nucleotide exchange factor activity of ARHGEF6 is essential for the PARVG-induced enhancement of cell spreading. In terms of tissue distribution, expressed strongly in spleen and testis, moderately in lung and weakly in brain and heart.

The protein localises to the cell junction. Its subcellular location is the focal adhesion. It localises to the cell membrane. The protein resides in the cytoplasm. It is found in the cytoskeleton. Plays a role with ILK in promoting the cell adhesion and spreading of leukocytes. The chain is Gamma-parvin (Parvg) from Mus musculus (Mouse).